The primary structure comprises 472 residues: Phosphoenolpyruvate carboxylase (472 aa).

The protein belongs to the PEPCase type 2 family. As to quaternary structure, homotetramer. Mg(2+) is required as a cofactor.

The catalysed reaction is oxaloacetate + phosphate = phosphoenolpyruvate + hydrogencarbonate. In terms of biological role, catalyzes the irreversible beta-carboxylation of phosphoenolpyruvate (PEP) to form oxaloacetate (OAA), a four-carbon dicarboxylic acid source for the tricarboxylic acid cycle. The protein is Phosphoenolpyruvate carboxylase of Pyrococcus furiosus (strain ATCC 43587 / DSM 3638 / JCM 8422 / Vc1).